A 616-amino-acid polypeptide reads, in one-letter code: Chaperone protein HscA (616 aa).

The protein belongs to the heat shock protein 70 family.

Functionally, chaperone involved in the maturation of iron-sulfur cluster-containing proteins. Has a low intrinsic ATPase activity which is markedly stimulated by HscB. Involved in the maturation of IscU. In Shigella flexneri serotype 5b (strain 8401), this protein is Chaperone protein HscA.